The following is a 629-amino-acid chain: Protein fem-1 homolog B (629 aa).

6 ANK repeats span residues 47–77 (QRST…DVQQ), 89–118 (DGAT…NVNH), 122–151 (TNST…NISI), 155–184 (YDNT…DPNA), 188–217 (CGAT…AMVV), and 220–250 (HGMT…DAKS). The TPR repeat unit spans residues 346–379 (SHPIIYRGAVYADNMQFEQCIKLWLHALQLRQKG). ANK repeat units follow at residues 485–529 (EGGS…NVNA) and 533–570 (MGNS…HTDM).

Belongs to the fem-1 family. As to quaternary structure, component of a CRL2 E3 ubiquitin-protein ligase complex, also named ECS (Elongin BC-CUL2/5-SOCS-box protein) complex.

The protein localises to the cytoplasm. Its subcellular location is the nucleus. The protein operates within protein modification; protein ubiquitination. Substrate-recognition component of a Cul2-RING (CRL2) E3 ubiquitin-protein ligase complex of the DesCEND (destruction via C-end degrons) pathway, which recognizes a C-degron located at the extreme C terminus of target proteins, leading to their ubiquitination and degradation. The C-degron recognized by the DesCEND pathway is usually a motif of less than ten residues and can be present in full-length proteins, truncated proteins or proteolytically cleaved forms. The CRL2(FEM1B) complex specifically recognizes proteins ending with -Gly-Leu-Asp-Arg, leading to their ubiquitination and degradation. The protein is Protein fem-1 homolog B of Xenopus laevis (African clawed frog).